Reading from the N-terminus, the 118-residue chain is Large ribosomal subunit protein bL20 (118 aa).

This sequence belongs to the bacterial ribosomal protein bL20 family.

Its function is as follows. Binds directly to 23S ribosomal RNA and is necessary for the in vitro assembly process of the 50S ribosomal subunit. It is not involved in the protein synthesizing functions of that subunit. The protein is Large ribosomal subunit protein bL20 of Sulfurovum sp. (strain NBC37-1).